Consider the following 168-residue polypeptide: tRNA-splicing endonuclease (168 aa).

Catalysis depends on residues Y107, H114, and K145.

It belongs to the tRNA-intron endonuclease family. Archaeal short subfamily. As to quaternary structure, homotetramer; although the tetramer contains four active sites, only two participate in the cleavage. Therefore, it should be considered as a dimer of dimers.

It carries out the reaction pretRNA = a 3'-half-tRNA molecule with a 5'-OH end + a 5'-half-tRNA molecule with a 2',3'-cyclic phosphate end + an intron with a 2',3'-cyclic phosphate and a 5'-hydroxyl terminus.. Endonuclease that removes tRNA introns. Cleaves pre-tRNA at the 5'- and 3'-splice sites to release the intron. The products are an intron and two tRNA half-molecules bearing 2',3' cyclic phosphate and 5'-OH termini. Recognizes a pseudosymmetric substrate in which 2 bulged loops of 3 bases are separated by a stem of 4 bp. The chain is tRNA-splicing endonuclease from Thermococcus kodakarensis (strain ATCC BAA-918 / JCM 12380 / KOD1) (Pyrococcus kodakaraensis (strain KOD1)).